The following is a 148-amino-acid chain: SsrA-binding protein (148 aa).

Residues 119–148 (AKGKKQHDKRETEKKRDWEREKARLMRSPG) form a disordered region. Positions 126-142 (DKRETEKKRDWEREKAR) are enriched in basic and acidic residues.

It belongs to the SmpB family.

It is found in the cytoplasm. Functionally, required for rescue of stalled ribosomes mediated by trans-translation. Binds to transfer-messenger RNA (tmRNA), required for stable association of tmRNA with ribosomes. tmRNA and SmpB together mimic tRNA shape, replacing the anticodon stem-loop with SmpB. tmRNA is encoded by the ssrA gene; the 2 termini fold to resemble tRNA(Ala) and it encodes a 'tag peptide', a short internal open reading frame. During trans-translation Ala-aminoacylated tmRNA acts like a tRNA, entering the A-site of stalled ribosomes, displacing the stalled mRNA. The ribosome then switches to translate the ORF on the tmRNA; the nascent peptide is terminated with the 'tag peptide' encoded by the tmRNA and targeted for degradation. The ribosome is freed to recommence translation, which seems to be the essential function of trans-translation. The sequence is that of SsrA-binding protein from Paraburkholderia xenovorans (strain LB400).